Here is a 97-residue protein sequence, read N- to C-terminus: MKRICSIYKSPRKNEMYLYVLKADGLERVPEGLLPFFGTPVHAFDLVLSPERKLAREDIAKVLENLDSQGYHLQMPPPDDDYIEHLPEELLRRNDPA.

Residues 3–87 (RICSIYKSPR…PDDDYIEHLP (85 aa)) form the YcgL domain.

This Pseudomonas entomophila (strain L48) protein is YcgL domain-containing protein PSEEN4034.